The following is a 77-amino-acid chain: Probable Fe(2+)-trafficking protein (77 aa).

This sequence belongs to the Fe(2+)-trafficking protein family. As to quaternary structure, monomer.

Functionally, could be a mediator in iron transactions between iron acquisition and iron-requiring processes, such as synthesis and/or repair of Fe-S clusters in biosynthetic enzymes. This Buchnera aphidicola subsp. Acyrthosiphon pisum (strain APS) (Acyrthosiphon pisum symbiotic bacterium) protein is Probable Fe(2+)-trafficking protein.